A 696-amino-acid chain; its full sequence is Polyribonucleotide nucleotidyltransferase (696 aa).

Mg(2+) contacts are provided by Asp-486 and Asp-492. A KH domain is found at 553–612 (PRIIVRNIPKDRIGELIGPGGKNVRGISELTGAELYIEDDGRVTISGSNQESAEKAAKMV). Positions 622–690 (GKIYEGKVKR…KTGKIDLSRK (69 aa)) constitute an S1 motif domain.

It belongs to the polyribonucleotide nucleotidyltransferase family. Mg(2+) serves as cofactor.

It localises to the cytoplasm. It catalyses the reaction RNA(n+1) + phosphate = RNA(n) + a ribonucleoside 5'-diphosphate. Functionally, involved in mRNA degradation. Catalyzes the phosphorolysis of single-stranded polyribonucleotides processively in the 3'- to 5'-direction. The sequence is that of Polyribonucleotide nucleotidyltransferase from Leptospira borgpetersenii serovar Hardjo-bovis (strain L550).